The sequence spans 82 residues: RNA-binding protein BH0128 (82 aa).

This sequence belongs to the eukaryotic ribosomal protein eL8 family.

The chain is RNA-binding protein BH0128 from Halalkalibacterium halodurans (strain ATCC BAA-125 / DSM 18197 / FERM 7344 / JCM 9153 / C-125) (Bacillus halodurans).